The chain runs to 306 residues: Glutathione transport system permease protein GsiC (306 aa).

The Cytoplasmic segment spans residues 1–8 (MLNYVIKR). Residues 9–29 (LLGLIPTLFIVSVLVFLFVHM) form a helical membrane-spanning segment. Over 30–102 (LPGDPARLIA…SRFMPTLWLT (73 aa)) the chain is Periplasmic. Residues 95–292 (FMPTLWLTIT…LEFILINLVV (198 aa)) form the ABC transmembrane type-1 domain. A helical membrane pass occupies residues 103–123 (ITSMVWAVIFGMAAGIIAAVW). Over 124–134 (RNRWPDRLSMT) the chain is Cytoplasmic. The helical transmembrane segment at 135–155 (IAVSGISFPAFALGMLLIQVF) threads the bilayer. The Periplasmic portion of the chain corresponds to 156-168 (SVELGWLPTVGAD). Residues 169–189 (SWQHYILPSLTLGAAVAAVMA) traverse the membrane as a helical segment. Residues 190–228 (RFTRASFVDVLSEDYMRTARAKGVSETWVVLKHGLRNAM) are Cytoplasmic-facing. A helical membrane pass occupies residues 229-249 (IPVVTMMGLQFGFLLGGSIVV). The Periplasmic segment spans residues 250–277 (EKVFNWPGLGRLLVDSVEMRDYPVIQAE). Residues 278 to 298 (ILLFSLEFILINLVVDVLYAA) traverse the membrane as a helical segment. Topologically, residues 299–306 (INPAIRYK) are cytoplasmic.

Belongs to the binding-protein-dependent transport system permease family. As to quaternary structure, the complex is composed of two ATP-binding proteins (GsiA), two transmembrane proteins (GsiC and GsiD) and a solute-binding protein (GsiB).

Its subcellular location is the cell inner membrane. In terms of biological role, part of the ABC transporter complex GsiABCD involved in glutathione import. Probably responsible for the translocation of the substrate across the membrane. The polypeptide is Glutathione transport system permease protein GsiC (Escherichia coli O6:H1 (strain CFT073 / ATCC 700928 / UPEC)).